The sequence spans 203 residues: FMN-dependent NADH:quinone oxidoreductase (203 aa).

FMN contacts are provided by residues S9, 15–17 (SVS), and 138–141 (SRGG).

This sequence belongs to the azoreductase type 1 family. In terms of assembly, homodimer. The cofactor is FMN.

The enzyme catalyses 2 a quinone + NADH + H(+) = 2 a 1,4-benzosemiquinone + NAD(+). The catalysed reaction is N,N-dimethyl-1,4-phenylenediamine + anthranilate + 2 NAD(+) = 2-(4-dimethylaminophenyl)diazenylbenzoate + 2 NADH + 2 H(+). Its function is as follows. Quinone reductase that provides resistance to thiol-specific stress caused by electrophilic quinones. Functionally, also exhibits azoreductase activity. Catalyzes the reductive cleavage of the azo bond in aromatic azo compounds to the corresponding amines. In Methylorubrum extorquens (strain PA1) (Methylobacterium extorquens), this protein is FMN-dependent NADH:quinone oxidoreductase.